Consider the following 137-residue polypeptide: Fluoride-specific ion channel FluC 1 (137 aa).

Helical transmembrane passes span 4 to 24, 37 to 57, 67 to 87, and 98 to 118; these read LIYIMVGIAGILGALSRYYLG, LATLLINLAGCFLLAWLTTYI, VITGIGTGFIGSFTTFSTFSV, and WGIAFLYVSCSILGGLIMSGL. Na(+)-binding residues include Gly-77 and Thr-80.

It belongs to the fluoride channel Fluc/FEX (TC 1.A.43) family.

It localises to the cell membrane. The enzyme catalyses fluoride(in) = fluoride(out). Its activity is regulated as follows. Na(+) is not transported, but it plays an essential structural role and its presence is essential for fluoride channel function. Functionally, fluoride-specific ion channel. Important for reducing fluoride concentration in the cell, thus reducing its toxicity. The chain is Fluoride-specific ion channel FluC 1 from Bacillus cereus (strain ZK / E33L).